A 186-amino-acid polypeptide reads, in one-letter code: Ribosome maturation factor RimM (186 aa).

The 83-residue stretch at 100 to 182 (NEGEYHVSDL…RIEINPPVGL (83 aa)) folds into the PRC barrel domain.

Belongs to the RimM family. In terms of assembly, binds ribosomal protein uS19.

Its subcellular location is the cytoplasm. In terms of biological role, an accessory protein needed during the final step in the assembly of 30S ribosomal subunit, possibly for assembly of the head region. Essential for efficient processing of 16S rRNA. May be needed both before and after RbfA during the maturation of 16S rRNA. It has affinity for free ribosomal 30S subunits but not for 70S ribosomes. This Rippkaea orientalis (strain PCC 8801 / RF-1) (Cyanothece sp. (strain PCC 8801)) protein is Ribosome maturation factor RimM.